The following is a 220-amino-acid chain: uncharacterized protein (220 aa).

This is an uncharacterized protein from Sinorhizobium fredii (strain NBRC 101917 / NGR234).